Here is a 265-residue protein sequence, read N- to C-terminus: Undecaprenyl-diphosphatase (265 aa).

7 helical membrane-spanning segments follow: residues 38–58 (SDMFNIVIQAGAILAVTIIYW), 80–100 (LIVAFLITAILGLVVKKLGFE), 107–127 (PIAWALIIGGIWMIFAEWAAA), 135–155 (ITWLVAILVGIAQIVAGVFPG), 175–195 (AAATEFAFLVGIPTMYAASGY), 213–233 (ALAIAFVVSTIVAFIAVKWLL), and 244–264 (FAIYRIILGVLLLGMTATGMI).

It belongs to the UppP family.

It localises to the cell inner membrane. The catalysed reaction is di-trans,octa-cis-undecaprenyl diphosphate + H2O = di-trans,octa-cis-undecaprenyl phosphate + phosphate + H(+). In terms of biological role, catalyzes the dephosphorylation of undecaprenyl diphosphate (UPP). Confers resistance to bacitracin. In Rhizobium etli (strain ATCC 51251 / DSM 11541 / JCM 21823 / NBRC 15573 / CFN 42), this protein is Undecaprenyl-diphosphatase.